A 484-amino-acid chain; its full sequence is Putative sodium/proton-dependent alanine carrier protein YrbD (484 aa).

Transmembrane regions (helical) follow at residues 11–31 (VLWSTPVIYILLGIGFAFSIM), 66–88 (ALSGRVGTGNIAGVATAIAFGGP), 92–114 (FWMWAIAFIGAASAFVESTLAQI), 139–159 (WFAVLFAAAALIAMAFLMPGV), 172–192 (FGISPFVTGCGLVLLLGFIIF), 205–225 (IVPFMAIGYILLSLIIIVMNV), 238–258 (SAFALDSAFGGLIGMAISWGV), 292–312 (AFSVYIDTLFVCSATAFMILF), 350–370 (GFGAGFVAIALFFFAFTTIMA), 390–410 (WAMLGLKLIILAATFYGTVKT), and 416–436 (ALGDAGLGIMVWLNVIAIVLL).

Belongs to the alanine or glycine:cation symporter (AGCS) (TC 2.A.25) family.

The protein resides in the cell membrane. The sequence is that of Putative sodium/proton-dependent alanine carrier protein YrbD (yrbD) from Bacillus subtilis (strain 168).